Reading from the N-terminus, the 127-residue chain is Ribonuclease P protein component (127 aa).

Belongs to the RnpA family. Consists of a catalytic RNA component (M1 or rnpB) and a protein subunit.

It carries out the reaction Endonucleolytic cleavage of RNA, removing 5'-extranucleotides from tRNA precursor.. In terms of biological role, RNaseP catalyzes the removal of the 5'-leader sequence from pre-tRNA to produce the mature 5'-terminus. It can also cleave other RNA substrates such as 4.5S RNA. The protein component plays an auxiliary but essential role in vivo by binding to the 5'-leader sequence and broadening the substrate specificity of the ribozyme. This chain is Ribonuclease P protein component, found in Synechococcus sp. (strain RCC307).